A 266-amino-acid polypeptide reads, in one-letter code: 3-methyl-2-oxobutanoate hydroxymethyltransferase (266 aa).

Residues Asp45 and Asp84 each coordinate Mg(2+). Residues 45 to 46, Asp84, and Lys113 contribute to the 3-methyl-2-oxobutanoate site; that span reads DS. Glu115 is a Mg(2+) binding site. Catalysis depends on Glu183, which acts as the Proton acceptor.

This sequence belongs to the PanB family. Homodecamer; pentamer of dimers. It depends on Mg(2+) as a cofactor.

Its subcellular location is the cytoplasm. The catalysed reaction is 3-methyl-2-oxobutanoate + (6R)-5,10-methylene-5,6,7,8-tetrahydrofolate + H2O = 2-dehydropantoate + (6S)-5,6,7,8-tetrahydrofolate. The protein operates within cofactor biosynthesis; (R)-pantothenate biosynthesis; (R)-pantoate from 3-methyl-2-oxobutanoate: step 1/2. In terms of biological role, catalyzes the reversible reaction in which hydroxymethyl group from 5,10-methylenetetrahydrofolate is transferred onto alpha-ketoisovalerate to form ketopantoate. The protein is 3-methyl-2-oxobutanoate hydroxymethyltransferase of Coxiella burnetii (strain CbuK_Q154) (Coxiella burnetii (strain Q154)).